The sequence spans 181 residues: Ferritin heavy chain (181 aa).

Methionine 1 bears the N-acetylmethionine mark. Threonine 2 is subject to N-acetylthreonine; in Ferritin heavy chain, N-terminally processed. The Ferritin-like diiron domain maps to 11 to 160 (QNYHQDSEAA…DHITNLRKMG (150 aa)). The Fe cation site is built by glutamate 28, glutamate 63, histidine 66, glutamate 108, and glutamine 142. Residue serine 179 is modified to Phosphoserine.

It belongs to the ferritin family. As to quaternary structure, oligomer of 24 subunits. There are two types of subunits: L (light) chain and H (heavy) chain. The major chain can be light or heavy, depending on the species and tissue type. The functional molecule forms a roughly spherical shell with a diameter of 12 nm and contains a central cavity into which the insoluble mineral iron core is deposited. Interacts with NCOA4; NCOA4 promotes targeting of the iron-binding ferritin complex to autolysosomes following starvation or iron depletion.

It is found in the cytoplasm. The protein resides in the lysosome. The protein localises to the cytoplasmic vesicle. It localises to the autophagosome. It catalyses the reaction 4 Fe(2+) + O2 + 4 H(+) = 4 Fe(3+) + 2 H2O. Stores iron in a soluble, non-toxic, readily available form. Important for iron homeostasis. Has ferroxidase activity. Iron is taken up in the ferrous form and deposited as ferric hydroxides after oxidation. Also plays a role in delivery of iron to cells. Mediates iron uptake in capsule cells of the developing kidney. Delivery to lysosomes is mediated by the cargo receptor NCOA4 for autophagic degradation and release of iron. The polypeptide is Ferritin heavy chain (FTH1) (Bos taurus (Bovine)).